The sequence spans 367 residues: Ribosomal RNA large subunit methyltransferase M (367 aa).

S-adenosyl-L-methionine is bound by residues Ser188, 221-224 (CPGG), Asp240, Asp260, and Asp277. The Proton acceptor role is filled by Lys306.

Belongs to the class I-like SAM-binding methyltransferase superfamily. RNA methyltransferase RlmE family. RlmM subfamily. In terms of assembly, monomer.

It localises to the cytoplasm. It carries out the reaction cytidine(2498) in 23S rRNA + S-adenosyl-L-methionine = 2'-O-methylcytidine(2498) in 23S rRNA + S-adenosyl-L-homocysteine + H(+). Its function is as follows. Catalyzes the 2'-O-methylation at nucleotide C2498 in 23S rRNA. The sequence is that of Ribosomal RNA large subunit methyltransferase M from Serratia proteamaculans (strain 568).